We begin with the raw amino-acid sequence, 388 residues long: Galactokinase (388 aa).

33-36 (EHTD) contributes to the substrate binding site. Residues Ser67 and 125-131 (GSGLSSS) each bind ATP. Mg(2+) is bound by residues Ser131 and Glu163. The active-site Proton acceptor is the Asp175. Substrate is bound at residue Tyr225.

The protein belongs to the GHMP kinase family. GalK subfamily.

It is found in the cytoplasm. The enzyme catalyses alpha-D-galactose + ATP = alpha-D-galactose 1-phosphate + ADP + H(+). The protein operates within carbohydrate metabolism; galactose metabolism. In terms of biological role, catalyzes the transfer of the gamma-phosphate of ATP to D-galactose to form alpha-D-galactose-1-phosphate (Gal-1-P). The sequence is that of Galactokinase from Lactobacillus helveticus (Lactobacillus suntoryeus).